The chain runs to 489 residues: Putative L,D-transpeptidase HI_1667 (489 aa).

A helical transmembrane segment spans residues 10-29; it reads LSLFALSLSMMMSGCVLVGL. A L,D-TPase catalytic domain is found at 254 to 433; sequence NGIFVNIPSY…ETRKNTVLAS (180 aa). H384 (proton donor/acceptor) is an active-site residue. Residue C403 is the Nucleophile of the active site.

The protein belongs to the YkuD family.

The protein localises to the membrane. It functions in the pathway cell wall biogenesis; peptidoglycan biosynthesis. This is Putative L,D-transpeptidase HI_1667 from Haemophilus influenzae (strain ATCC 51907 / DSM 11121 / KW20 / Rd).